Reading from the N-terminus, the 393-residue chain is Dwarfin sma-3 (393 aa).

In terms of domain architecture, MH1 spans Pro-10–Leu-139. Zn(2+) contacts are provided by Cys-65, Cys-110, Cys-124, and His-129. The interval Pro-136–Pro-190 is disordered. Over residues Ser-141 to Ser-176 the composition is skewed to low complexity. The MH2 domain maps to Trp-197–Thr-393.

The protein belongs to the dwarfin/SMAD family.

It localises to the cytoplasm. It is found in the nucleus. In terms of biological role, involved in TGF-beta pathway. Plays a role in male tail tip morphogenesis. In Caenorhabditis elegans, this protein is Dwarfin sma-3.